The sequence spans 433 residues: Trigger factor (433 aa).

The 86-residue stretch at 163–248 folds into the PPIase FKBP-type domain; the sequence is GDVVVLDFAA…VHAVKERRLP (86 aa).

Belongs to the FKBP-type PPIase family. Tig subfamily.

The protein localises to the cytoplasm. It catalyses the reaction [protein]-peptidylproline (omega=180) = [protein]-peptidylproline (omega=0). Involved in protein export. Acts as a chaperone by maintaining the newly synthesized protein in an open conformation. Functions as a peptidyl-prolyl cis-trans isomerase. This is Trigger factor from Nitratidesulfovibrio vulgaris (strain DP4) (Desulfovibrio vulgaris).